Here is an 89-residue protein sequence, read N- to C-terminus: Small ribosomal subunit protein uS15 (89 aa).

Belongs to the universal ribosomal protein uS15 family. Part of the 30S ribosomal subunit. Forms a bridge to the 50S subunit in the 70S ribosome, contacting the 23S rRNA.

Its function is as follows. One of the primary rRNA binding proteins, it binds directly to 16S rRNA where it helps nucleate assembly of the platform of the 30S subunit by binding and bridging several RNA helices of the 16S rRNA. Forms an intersubunit bridge (bridge B4) with the 23S rRNA of the 50S subunit in the ribosome. This Shewanella frigidimarina (strain NCIMB 400) protein is Small ribosomal subunit protein uS15.